We begin with the raw amino-acid sequence, 147 residues long: uncharacterized protein (147 aa).

Residues 51 to 72 (VTSSMSVMNDSEECPLINGPSM) are disordered.

This is an uncharacterized protein from Gallid herpesvirus 2 (strain GA) (GaHV-2).